We begin with the raw amino-acid sequence, 529 residues long: Bifunctional purine biosynthesis protein PurH (529 aa).

Residues 1–148 enclose the MGS-like domain; sequence MQQRRPVRRA…KNHKDVAIVV (148 aa).

Belongs to the PurH family.

The catalysed reaction is (6R)-10-formyltetrahydrofolate + 5-amino-1-(5-phospho-beta-D-ribosyl)imidazole-4-carboxamide = 5-formamido-1-(5-phospho-D-ribosyl)imidazole-4-carboxamide + (6S)-5,6,7,8-tetrahydrofolate. The enzyme catalyses IMP + H2O = 5-formamido-1-(5-phospho-D-ribosyl)imidazole-4-carboxamide. It functions in the pathway purine metabolism; IMP biosynthesis via de novo pathway; 5-formamido-1-(5-phospho-D-ribosyl)imidazole-4-carboxamide from 5-amino-1-(5-phospho-D-ribosyl)imidazole-4-carboxamide (10-formyl THF route): step 1/1. It participates in purine metabolism; IMP biosynthesis via de novo pathway; IMP from 5-formamido-1-(5-phospho-D-ribosyl)imidazole-4-carboxamide: step 1/1. This chain is Bifunctional purine biosynthesis protein PurH, found in Klebsiella pneumoniae subsp. pneumoniae (strain ATCC 700721 / MGH 78578).